The primary structure comprises 261 residues: Early E1A protein (261 aa).

An interaction with RB1 in competition with E2F1 region spans residues 43-51; sequence PTLHDLYDL. An interaction with UBE2I region spans residues 78–149; that stretch reads EGLDINPPPE…VNEGVKAASD (72 aa). The short motif at 106-110 is the PXLXP motif, interaction with host ZMYND11 element; that stretch reads PDLGA. The short motif at 115-119 is the LXCXE motif, interaction with host RB1 and TMEM173/STING element; the sequence is LRCYE. Residues 163–183 fold into a zinc finger; the sequence is CKSCEFHRNNTGMKELLCSLC. The interval 197–261 is disordered; that stretch reads SDDESPSPDS…DLSTRKLPRQ (65 aa). Low complexity predominate over residues 203–212; sequence SPDSTTSPPE. Residues 250–254 carry the PXDLS motif, CTBP-binding motif; the sequence is PLDLS. The Nuclear localization signal signature appears at 256–261; sequence RKLPRQ.

It belongs to the adenoviridae E1A protein family. In terms of assembly, interacts with host UBE2I; this interaction interferes with polySUMOylation. Interacts with host RB1; this interaction induces the aberrant dissociation of RB1-E2F1 complex thereby disrupting the activity of RB1 and activating E2F1-regulated genes. Interacts with host ATF7; the interaction enhances ATF7-mediated viral transactivation activity which requires the zinc binding domains of both proteins. Isoform early E1A 32 kDa protein and isoform early E1A 26 kDa protein interact (via N-terminus) with CUL1 and E3 ubiquitin ligase RBX1; these interactions inhibit RBX1-CUL1-dependent elongation reaction of ubiquitin chains and attenuate ubiquitination of SCF(FBXW7) target proteins. Interacts (via PXLXP motif) with host ZMYND11/BS69 (via MYND-type zinc finger); this interaction inhibits E1A mediated transactivation. Interacts with host EP300; this interaction stimulates the acetylation of RB1 by recruiting EP300 and RB1 into a multimeric-protein complex. Interacts with host CTBP1 and CTBP2; this interaction seems to potentiate viral replication. Interacts with host DCAF7. Interacts with host DYRK1A. Interacts with host KPNA4; this interaction allows E1A import into the host nucleus. Interacts with host EP400; this interaction stabilizes MYC. Interacts with host TBP protein; this interaction probably disrupts the TBP-TATA complex. Interacts (via LXCXE motif) with host TMEM173/STING; this interaction impairs the ability of TMEM173/STING to sense cytosolic DNA and promote the production of type I interferon (IFN-alpha and IFN-beta). Interacts (via C-terminus) with host ZBED1/hDREF (via C-terminus); the interaction is direct.

It is found in the host nucleus. Plays a role in viral genome replication by driving entry of quiescent cells into the cell cycle. Stimulation of progression from G1 to S phase allows the virus to efficiently use the cellular DNA replicating machinery to achieve viral genome replication. E1A protein has both transforming and trans-activating activities. Induces the disassembly of the E2F1 transcription factor from RB1 by direct competition for the same binding site on RB1, with subsequent transcriptional activation of E2F1-regulated S-phase genes and of the E2 region of the adenoviral genome. Release of E2F1 leads to the ARF-mediated inhibition of MDM2 and causes TP53/p53 to accumulate because it is not targeted for degradation by MDM2-mediated ubiquitination anymore. This increase in TP53, in turn, would arrest the cell proliferation and direct its death but this effect is counteracted by the viral protein E1B-55K. Inactivation of the ability of RB1 to arrest the cell cycle is critical for cellular transformation, uncontrolled cellular growth and proliferation induced by viral infection. Interaction with RBX1 and CUL1 inhibits ubiquitination of the proteins targeted by SCF(FBXW7) ubiquitin ligase complex, and may be linked to unregulated host cell proliferation. The tumorigenesis-restraining activity of E1A may be related to the disruption of the host CtBP-CtIP complex through the CtBP binding motif. Interaction with host TMEM173/STING impairs the ability of TMEM173/STING to sense cytosolic DNA and promote the production of type I interferon (IFN-alpha and IFN-beta). Promotes the sumoylation of host ZBED1/hDREF with SUMO1. The protein is Early E1A protein of Human adenovirus B serotype 7 (HAdV-7).